The primary structure comprises 329 residues: Vomeronasal type-1 receptor 42 (329 aa).

Over 1-32 the chain is Extracellular; sequence MGDILFSSPQSMFSHTMNKNSILHTHSIIGKT. The chain crosses the membrane as a helical span at residues 33 to 53; it reads FFSEIGIGISGNSFLLLVHIL. At 54 to 65 the chain is on the cytoplasmic side; that stretch reads KFIRGHRPRLTD. A helical transmembrane segment spans residues 66–86; the sequence is LPIGLLSLIHLLMLLVAAFIA. At 87–109 the chain is on the extracellular side; that stretch reads TDIFISRRGWDDIICKFLVYLYR. Cysteines 101 and 188 form a disulfide. Residues 110–130 form a helical membrane-spanning segment; it reads VLRGFSLCTTSMLSILQAIIL. Over 131-150 the chain is Cytoplasmic; that stretch reads SPRSSCLAKFKHISPHHISG. Residues 151-171 form a helical membrane-spanning segment; the sequence is AILFLSVLYMLIGSQLLVSII. Over 172 to 209 the chain is Extracellular; the sequence is ATPNLTMNDFIYVTQSCSILPLSYLMQSIYSTLLAIRE. N-linked (GlcNAc...) asparagine glycosylation occurs at Asn-175. The chain crosses the membrane as a helical span at residues 210-230; sequence FFLISLMVLSNWYMVALLSMH. The Cytoplasmic portion of the chain corresponds to 231-254; sequence RKQTQHLHGTNLSPKKSPEQSATQ. A helical transmembrane segment spans residues 255–275; it reads TILMLISFFLLMTIYDTIVSC. Topologically, residues 276 to 285 are extracellular; that stretch reads SRTMFLNDPT. Residues 286-306 traverse the membrane as a helical segment; it reads SYSIELFIMHIYATVSPFVFM. The Cytoplasmic segment spans residues 307–329; that stretch reads STEKHIVNFLRSLGKRVINFNLH.

This sequence belongs to the G-protein coupled receptor 1 family.

The protein resides in the cell membrane. Functionally, putative pheromone receptor implicated in the regulation of social and reproductive behavior. This chain is Vomeronasal type-1 receptor 42 (Vmn1r42), found in Mus musculus (Mouse).